The chain runs to 289 residues: ATP synthase gamma chain (289 aa).

Belongs to the ATPase gamma chain family. In terms of assembly, F-type ATPases have 2 components, CF(1) - the catalytic core - and CF(0) - the membrane proton channel. CF(1) has five subunits: alpha(3), beta(3), gamma(1), delta(1), epsilon(1). CF(0) has three main subunits: a, b and c.

The protein resides in the cell inner membrane. Produces ATP from ADP in the presence of a proton gradient across the membrane. The gamma chain is believed to be important in regulating ATPase activity and the flow of protons through the CF(0) complex. The protein is ATP synthase gamma chain of Leptospira biflexa serovar Patoc (strain Patoc 1 / ATCC 23582 / Paris).